We begin with the raw amino-acid sequence, 187 residues long: Basic helix-loop-helix transcription factor scleraxis (187 aa).

2 disordered regions span residues 21–83 and 140–163; these read LSED…TNSV and AFFHHGGGGGSPPPRDSENSQPKQ. Positions 34-43 are enriched in basic and acidic residues; it reads SDEKPFHLDA. A compositionally biased stretch (basic residues) spans 50–72; the sequence is AGKRRSGKKAGRLHREPRQRHTA. Residues 67 to 119 form the bHLH domain; that stretch reads RQRHTANARERDRTNSVNTAFTALRTLIPTEPADRKLSKIETLRLASSYISHL.

As to quaternary structure, efficient DNA binding requires dimerization with another bHLH protein. Dimerizes and binds the E-box consensus sequence with E12. As to expression, expressed in the intersomitic, the superficial proximomedial limb mesenchyme and the subectodermal mesenchyme.

It localises to the nucleus. In terms of biological role, plays an early essential role in mesoderm formation, as well as a later role in formation of somite-derived chondrogenic lineages. In Gallus gallus (Chicken), this protein is Basic helix-loop-helix transcription factor scleraxis (SCX).